Reading from the N-terminus, the 89-residue chain is Small ribosomal subunit protein bS20 (89 aa).

Belongs to the bacterial ribosomal protein bS20 family.

Functionally, binds directly to 16S ribosomal RNA. This chain is Small ribosomal subunit protein bS20, found in Stenotrophomonas maltophilia (strain R551-3).